We begin with the raw amino-acid sequence, 270 residues long: Diaminopimelate epimerase (270 aa).

N15, Q49, and N66 together coordinate substrate. The Proton donor role is filled by C75. Residues 76–77 (GN), N155, N187, and 204–205 (ER) each bind substrate. C213 functions as the Proton acceptor in the catalytic mechanism. 214–215 (GS) is a binding site for substrate.

It belongs to the diaminopimelate epimerase family. Homodimer.

It is found in the cytoplasm. The catalysed reaction is (2S,6S)-2,6-diaminopimelate = meso-2,6-diaminopimelate. It participates in amino-acid biosynthesis; L-lysine biosynthesis via DAP pathway; DL-2,6-diaminopimelate from LL-2,6-diaminopimelate: step 1/1. Its function is as follows. Catalyzes the stereoinversion of LL-2,6-diaminopimelate (L,L-DAP) to meso-diaminopimelate (meso-DAP), a precursor of L-lysine and an essential component of the bacterial peptidoglycan. This is Diaminopimelate epimerase from Rickettsia felis (strain ATCC VR-1525 / URRWXCal2) (Rickettsia azadi).